The chain runs to 341 residues: L-threonine 3-dehydrogenase (341 aa).

Cys-38 provides a ligand contact to Zn(2+). Residues Thr-40 and His-43 each act as charge relay system in the active site. Zn(2+) is bound by residues His-63, Glu-64, Cys-93, Cys-96, Cys-99, and Cys-107. NAD(+)-binding positions include Ile-175, Asp-195, Arg-200, 262–264 (LGI), and 286–287 (IY).

Belongs to the zinc-containing alcohol dehydrogenase family. In terms of assembly, homotetramer. Zn(2+) serves as cofactor.

The protein localises to the cytoplasm. It catalyses the reaction L-threonine + NAD(+) = (2S)-2-amino-3-oxobutanoate + NADH + H(+). Its pathway is amino-acid degradation; L-threonine degradation via oxydo-reductase pathway; glycine from L-threonine: step 1/2. In terms of biological role, catalyzes the NAD(+)-dependent oxidation of L-threonine to 2-amino-3-ketobutyrate. In Escherichia coli O139:H28 (strain E24377A / ETEC), this protein is L-threonine 3-dehydrogenase.